A 573-amino-acid polypeptide reads, in one-letter code: Urease subunit alpha 2 (573 aa).

One can recognise a Urease domain in the interval 135–573 (GGMDTHVHYI…ISLNQLYFFS (439 aa)). Residues H140, H142, and K223 each coordinate Ni(2+). N6-carboxylysine is present on K223. H225 lines the substrate pocket. Ni(2+)-binding residues include H252 and H278. H326 functions as the Proton donor in the catalytic mechanism. Ni(2+) is bound at residue D366.

Belongs to the metallo-dependent hydrolases superfamily. Urease alpha subunit family. Heterotrimer of UreA (gamma), UreB (beta) and UreC (alpha) subunits. Three heterotrimers associate to form the active enzyme. The cofactor is Ni cation. Post-translationally, carboxylation allows a single lysine to coordinate two nickel ions.

It localises to the cytoplasm. It catalyses the reaction urea + 2 H2O + H(+) = hydrogencarbonate + 2 NH4(+). Its pathway is nitrogen metabolism; urea degradation; CO(2) and NH(3) from urea (urease route): step 1/1. Disrupting the ure2 operon has no effect on urease activity or pathogen survival in BALB/c mice when administered orally. The polypeptide is Urease subunit alpha 2 (Brucella abortus (strain 2308)).